Consider the following 256-residue polypeptide: MARDEKTIFLFDVDGTLSESRAKMPEKMGKMLESLRRKVRIGFVGGSDLAKQKEQVGDNILEIFDYGFPENGVSFYKNGTLESQEKIIDVLGEEFYKEFANFVLRYLSDIDLPIKRGNFIEYRNSMINISPIGRNCSREERMKFFELDKKEKFREKMVTAMRDRFKDSCLVFSIGGQISIDCFPKGWDKTYCLRHIKKEGVENVYFFGDMTMEGGNDYEIYNHKDVHGISVGNPDDTYRKVDQALKKIGLGGLEEN.

Aspartate 12 acts as the Nucleophile in catalysis. Residues aspartate 12 and aspartate 14 each contribute to the Mg(2+) site. Residue aspartate 14 is the Proton donor/acceptor of the active site. The alpha-D-mannose 1-phosphate site is built by arginine 21, arginine 123, arginine 134, arginine 141, serine 179, and aspartate 181. Residue aspartate 209 participates in Mg(2+) binding.

The protein belongs to the eukaryotic PMM family. Homodimer.

It localises to the cytoplasm. The enzyme catalyses alpha-D-mannose 1-phosphate = D-mannose 6-phosphate. Its pathway is nucleotide-sugar biosynthesis; GDP-alpha-D-mannose biosynthesis; alpha-D-mannose 1-phosphate from D-fructose 6-phosphate: step 2/2. Its function is as follows. Involved in the synthesis of the GDP-mannose and dolichol-phosphate-mannose required for a number of critical mannosyl transfer reactions. The protein is Phosphomannomutase (SEC53) of Encephalitozoon cuniculi (strain GB-M1) (Microsporidian parasite).